We begin with the raw amino-acid sequence, 566 residues long: DNA helicase/primase (566 aa).

Zn(2+)-binding residues include C17, C20, C36, and C39. The segment at 17 to 39 (CDNCGSSDGNSLFSDGHTFCYVC) adopts a C4-like; zinc ribbon fold zinc-finger fold. The Toprim domain maps to 151-238 (KKIVVTEGEI…RVAVLPCKDA (88 aa)). Residues E157, D207, and D237 each coordinate Mg(2+). Positions 281-548 (SEESVGLLFS…TGWLEPSSYS (268 aa)) constitute an SF4 helicase domain. 312-319 (SGSGMGKS) serves as a coordination point for ATP. Residues 543-566 (EPSSYSGEEESHSESTDWSNDTDF) form a disordered region. The binding to viral DNA polymerase stretch occupies residues 550 to 566 (EEESHSESTDWSNDTDF).

The protein belongs to the Teseptimavirus DNA helicase/primase family. Homohexamer. Assembles as a hexamer onto linear or circular ssDNA in the presence of ATP or dTTP. Present in a mixture of heptamers and hexamers in the absence of DNA. Interacts (via C-terminus) with the viral DNA polymerase that is bound to DNA; this interaction is essential to initiate leading-strand DNA synthesis. The priming complex consists of 2 DNA polymerases and 1 helicase-primase hexamer that assemble on the DNA template. Interacts with the single-stranded DNA-binding protein. Part of the replicase complex that includes the DNA polymerase, thioredoxin, the primase/helicase and the single-stranded DNA binding protein. Mg(2+) is required as a cofactor.

The enzyme catalyses ATP + H2O = ADP + phosphate + H(+). ATP-dependent DNA helicase and primase essential for viral DNA replication and recombination. The helicase moves 5' -&gt; 3' on the lagging strand template, unwinding the DNA duplex ahead of the leading strand polymerase at the replication fork and generating ssDNA for both leading and lagging strand synthesis. ATP or dTTP hydrolysis propels each helicase domain to translocate 2 nt per step sequentially along DNA. Mediates strand transfer when a joint molecule is available and participates in recombinational DNA repair through its role in strand exchange. Primase activity synthesizes short RNA primers at the sequence 5'-GTC-3' on the lagging strand that the polymerase elongates using dNTPs and providing the primase is still present. The chain is DNA helicase/primase from Escherichia phage T7 (Bacteriophage T7).